We begin with the raw amino-acid sequence, 361 residues long: Core-capsid bridging protein (361 aa).

The span at 311–321 (RRRRVARRSKS) shows a compositional bias: basic residues. Residues 311–331 (RRRRVARRSKSTGRFVAAPRK) form a disordered region.

This sequence belongs to the adenoviridae core-capsid bridging protein family. As to quaternary structure, monomer. Homodimer. Exists in equilibrium between monomers and dimers in solution. Interacts with the histone-like nucleoprotein; this interactions bridge the virus core to the capsid. Interacts with core protein X; this interactions bridge the virus core to the capsid. Interacts with the endosome lysis protein VI; this interactions bridge the virus core to the capsid. Interacts with the peripentonal hexons. Interacts with host NPM1; this interaction might play a role in virus assembly.

It is found in the virion. The protein localises to the host nucleus. It localises to the host nucleolus. Functionally, associates loosely with the viral DNA to form an outer shell around the nucleoprotein-DNA complex and links it with the capsid by binding the endosome lysis protein. Dissociates from the viral genome during entry. Might be involved in nuclear capsid assembly of the viral particles through its association with NPM1/nucleophosmin. This chain is Core-capsid bridging protein, found in Bovine adenovirus 2 (BAdV-2).